The primary structure comprises 313 residues: tRNA-cytidine(32) 2-sulfurtransferase (313 aa).

The short motif at 47–52 (SGGKDS) is the PP-loop motif element. Residues Cys122, Cys125, and Cys213 each coordinate [4Fe-4S] cluster. The tract at residues 288–313 (PVGWQPEDDEDTEKRPPVRLDVLEIK) is disordered. The span at 299 to 313 (TEKRPPVRLDVLEIK) shows a compositional bias: basic and acidic residues.

The protein belongs to the TtcA family. In terms of assembly, homodimer. The cofactor is Mg(2+). It depends on [4Fe-4S] cluster as a cofactor.

It localises to the cytoplasm. The enzyme catalyses cytidine(32) in tRNA + S-sulfanyl-L-cysteinyl-[cysteine desulfurase] + AH2 + ATP = 2-thiocytidine(32) in tRNA + L-cysteinyl-[cysteine desulfurase] + A + AMP + diphosphate + H(+). Its pathway is tRNA modification. In terms of biological role, catalyzes the ATP-dependent 2-thiolation of cytidine in position 32 of tRNA, to form 2-thiocytidine (s(2)C32). The sulfur atoms are provided by the cysteine/cysteine desulfurase (IscS) system. This chain is tRNA-cytidine(32) 2-sulfurtransferase, found in Yersinia pseudotuberculosis serotype O:1b (strain IP 31758).